We begin with the raw amino-acid sequence, 481 residues long: Autolysin (481 aa).

One can recognise a Peptidase C51 domain in the interval 7 to 142 (KNEFIERLKT…LQDDNMLMIS (136 aa)). The region spanning 198–323 (SNPKGIVIHN…NEFTSTSCPH (126 aa)) is the N-acetylmuramoyl-L-alanine amidase domain. Residues 398–466 (EESARFTNGN…YLPIRTWNGS (69 aa)) form the SH3b domain.

Belongs to the N-acetylmuramoyl-L-alanine amidase 2 family.

The protein localises to the secreted. It carries out the reaction Hydrolyzes the link between N-acetylmuramoyl residues and L-amino acid residues in certain cell-wall glycopeptides.. In terms of biological role, autolysins are involved in some important biological processes such as cell separation, cell-wall turnover, competence for genetic transformation, formation of the flagella and sporulation. Autolysin strictly depends on the presence of choline-containing cell walls for activity. This Staphylococcus aureus protein is Autolysin (lytA).